The following is a 606-amino-acid chain: Kelch-like protein 26 (606 aa).

Residues 1-19 (MAESGGSSGSSQSPERPSS) show a composition bias toward low complexity. Residues 1–20 (MAESGGSSGSSQSPERPSSL) form a disordered region. Residue Ala-2 is modified to N-acetylalanine. In terms of domain architecture, BTB spans 54–121 (LDVVLTVNSE…AYSAEVTLDL (68 aa)). Residues 156-257 (CLHIGQMATT…QPAELVDSVQ (102 aa)) form the BACK domain. 6 Kelch repeats span residues 301–352 (SLVA…VLDN), 353–404 (FVYV…ALGG), 406–451 (LYAT…AAAG), 452–499 (RLYI…GAAG), 501–550 (IYAL…LLER), and 552–599 (IYIV…AVLL). Ser-430 is modified (phosphoserine).

Its function is as follows. May play a role in endo(sarco)plasmic reticulum (ER/SR) mitochondrial signaling. May be part of the ubiquitin-proteasome system (UPS) and affect ubiquitination and degradation of target substrates in cardiomyocytes. The sequence is that of Kelch-like protein 26 (Klhl26) from Mus musculus (Mouse).